A 335-amino-acid chain; its full sequence is Fructokinase-2 (335 aa).

The protein belongs to the carbohydrate kinase PfkB family. As to expression, expressed in roots, at higher levels in stems, and hardly detectable in leaves.

The catalysed reaction is D-fructose + ATP = D-fructose 6-phosphate + ADP + H(+). Its pathway is glycan biosynthesis; starch biosynthesis. Its activity is regulated as follows. Inhibited at high fructose. May play an important role in maintaining the flux of carbon towards starch formation. May also be involved in a sugar-sensing pathway. The polypeptide is Fructokinase-2 (FRK2) (Zea mays (Maize)).